The sequence spans 738 residues: Wall-associated receptor kinase 4 (738 aa).

The first 22 residues, 1-22, serve as a signal peptide directing secretion; that stretch reads MKVQRLFLVAIFCLSYMQLVKG. Over 23-335 the chain is Extracellular; it reads QTLPRCPEKC…PKGNPEYVEW (313 aa). Asn-34, Asn-56, Asn-109, Asn-115, Asn-132, Asn-182, and Asn-208 each carry an N-linked (GlcNAc...) asparagine glycan. Residues 232–278 form the EGF-like 1 domain; it reads RGETCGQVGEKKCGVNGICSNSASGIGYTCKCKGGFQGNPYLQNGCQ. 6 disulfide bridges follow: Cys-236-Cys-250, Cys-244-Cys-261, Cys-263-Cys-277, Cys-283-Cys-300, Cys-294-Cys-309, and Cys-311-Cys-324. Positions 279–325 constitute an EGF-like 2; calcium-binding domain; sequence DINECTTANPIHKHNCSGDSTCENKLGHFRCNCRSRYELNTTTNTCK. Residue Asn-293 is glycosylated (N-linked (GlcNAc...) asparagine). The N-linked (GlcNAc...) asparagine glycan is linked to Asn-318. Residues 336–356 traverse the membrane as a helical segment; sequence TTIVLGTTIGFLVILLAISCI. Residues 357 to 738 lie on the Cytoplasmic side of the membrane; the sequence is EHKMKNTKDT…VAILDIEAGR (382 aa). Thr-399 carries the phosphothreonine modification. The Protein kinase domain occupies 410–693; it reads YDENRILGQG…RVTKTKHKWS (284 aa). ATP contacts are provided by residues 416–424 and Lys-438; that span reads LGQGGQGTV. Phosphotyrosine is present on Tyr-483. Asp-535 functions as the Proton acceptor in the catalytic mechanism. Thr-569 and Thr-574 each carry phosphothreonine. Tyr-582 bears the Phosphotyrosine mark.

The protein belongs to the protein kinase superfamily. Ser/Thr protein kinase family. Strictly expressed in siliques.

It localises to the membrane. The enzyme catalyses L-seryl-[protein] + ATP = O-phospho-L-seryl-[protein] + ADP + H(+). The catalysed reaction is L-threonyl-[protein] + ATP = O-phospho-L-threonyl-[protein] + ADP + H(+). In terms of biological role, serine/threonine-protein kinase that may function as a signaling receptor of extracellular matrix component. Binding to pectin may have significance in the control of cell expansion, morphogenesis and development. This Arabidopsis thaliana (Mouse-ear cress) protein is Wall-associated receptor kinase 4 (WAK4).